The chain runs to 107 residues: Large ribosomal subunit protein eL21 (107 aa).

Belongs to the eukaryotic ribosomal protein eL21 family.

This is Large ribosomal subunit protein eL21 (rpl21e) from Aeropyrum pernix (strain ATCC 700893 / DSM 11879 / JCM 9820 / NBRC 100138 / K1).